Here is a 139-residue protein sequence, read N- to C-terminus: Cystatin-11 (139 aa).

The signal sequence occupies residues 1-28 (MAAGSWKATRLLLAILVALVAFSYQVKR). 2 disulfide bridges follow: Cys-94–Cys-102 and Cys-115–Cys-135. An N-linked (GlcNAc...) asparagine glycan is attached at Asn-134.

The protein belongs to the cystatin family. In terms of tissue distribution, expressed in epididymis, where it localizes to the proximal caput and also part of the midcaput. Not detected in other tissues tested.

It localises to the secreted. In terms of biological role, has antibacterial activity against the Gram-negative bacteria E.coli. May play a role in sperm maturation and fertilization. The polypeptide is Cystatin-11 (Mus musculus (Mouse)).